The primary structure comprises 440 residues: Translation initiation factor eIF2B subunit gamma (440 aa).

Belongs to the eIF-2B gamma/epsilon subunits family. As to quaternary structure, component of the translation initiation factor 2B (eIF2B) complex which is a heterodecamer of two sets of five different subunits: alpha, beta, gamma, delta and epsilon. Subunits alpha, beta and delta comprise a regulatory subcomplex and subunits epsilon and gamma comprise a catalytic subcomplex. Within the complex, the hexameric regulatory complex resides at the center, with the two heterodimeric catalytic subcomplexes bound on opposite sides.

It is found in the cytoplasm. Its subcellular location is the cytosol. Functionally, acts as a component of the translation initiation factor 2B (eIF2B) complex, which catalyzes the exchange of GDP for GTP on the eukaryotic initiation factor 2 (eIF2) complex gamma subunit. Its guanine nucleotide exchange factor activity is repressed when bound to eIF2 complex phosphorylated on the alpha subunit, thereby limiting the amount of methionyl-initiator methionine tRNA available to the ribosome and consequently global translation is repressed. This chain is Translation initiation factor eIF2B subunit gamma (eif2b3), found in Dictyostelium discoideum (Social amoeba).